We begin with the raw amino-acid sequence, 240 residues long: Heme oxygenase 1 (240 aa).

5 residues coordinate heme b: R10, H17, Y125, K168, and R172.

This sequence belongs to the heme oxygenase family.

It carries out the reaction heme b + 3 reduced [NADPH--hemoprotein reductase] + 3 O2 = biliverdin IXalpha + CO + Fe(2+) + 3 oxidized [NADPH--hemoprotein reductase] + 3 H2O + H(+). In terms of biological role, catalyzes the opening of the heme ring with the release of iron. Key enzyme in the synthesis of the chromophoric part of the photosynthetic antennae. In Synechocystis sp. (strain ATCC 27184 / PCC 6803 / Kazusa), this protein is Heme oxygenase 1 (pbsA1).